We begin with the raw amino-acid sequence, 233 residues long: Transcriptional regulatory protein WalR (233 aa).

The 114-residue stretch at 4–117 folds into the Response regulatory domain; that stretch reads KVVVVDDEKP…ELIARVKANL (114 aa). Aspartate 53 carries the 4-aspartylphosphate modification. Residues 132–231 constitute a DNA-binding region (ompR/PhoB-type); the sequence is TNEITIKDIV…RRGVGYFLQQ (100 aa).

Post-translationally, phosphorylated by WalK.

It is found in the cytoplasm. In terms of biological role, member of the two-component regulatory system WalK/WalR. The polypeptide is Transcriptional regulatory protein WalR (walR) (Staphylococcus epidermidis (strain ATCC 12228 / FDA PCI 1200)).